Reading from the N-terminus, the 288-residue chain is Phenazine biosynthesis-like domain-containing protein (288 aa).

Residue Glu-46 is part of the active site.

This sequence belongs to the PhzF family. Interacts with UNRIP/MAWD.

This chain is Phenazine biosynthesis-like domain-containing protein (PBLD), found in Bos taurus (Bovine).